A 723-amino-acid chain; its full sequence is Transmembrane channel-like protein 7 (723 aa).

Disordered regions lie at residues 1 to 28 and 51 to 71; these read MSES…LSLD and RRRT…KPTD. At 1 to 168 the chain is on the extracellular side; it reads MSESSGSALQ…GIQSYFSFLR (168 aa). The N-linked (GlcNAc...) asparagine glycan is linked to N24. N84 is a glycosylation site (N-linked (GlcNAc...) asparagine). S89 is modified (phosphoserine). Residue N96 is glycosylated (N-linked (GlcNAc...) asparagine). A helical transmembrane segment spans residues 169–189; sequence FLVLLNLVIFLIIFMLVLLPV. Topologically, residues 190-219 are cytoplasmic; that stretch reads LLTKYKITNSSFVLIPFKDMDKQCTVYPVS. Residues 220–240 form a helical membrane-spanning segment; it reads SSGLIYFYSYIIDLLSGTGFL. Topologically, residues 241-263 are extracellular; sequence EETSLFYGHYTIDGVKFQNFTYD. N-linked (GlcNAc...) asparagine glycosylation is present at N259. A helical membrane pass occupies residues 264–284; the sequence is LPLAYLLSTIASLALSLLWIV. The Cytoplasmic segment spans residues 285–362; the sequence is KRSVEGFKIN…EETIRIYSLR (78 aa). Residues 363–383 form a helical membrane-spanning segment; sequence LFLNCIVLAVLGACFYAIYVA. The Extracellular portion of the chain corresponds to 384-404; sequence TVFSQEHMKKEIDKMVFGENL. A helical transmembrane segment spans residues 405–425; sequence FILYLPSIVITLANFITPMIF. Residues 426–494 are Cytoplasmic-facing; the sequence is AKIIRYEDYS…PCWETQVGQE (69 aa). A helical transmembrane segment spans residues 495 to 515; the sequence is MYKLMIFDFIIILAVTLFVDF. Topologically, residues 516 to 555 are extracellular; sequence PRKLLVTYCSSCKLIQCWGQQEFAIPDNVLGIVYGQTICW. Residues 556-576 form a helical membrane-spanning segment; the sequence is IGAFFSPLLPAIATLKFIIIF. Residues 577 to 601 are Cytoplasmic-facing; the sequence is YVKEWSLLYTCRPSPRPFRASNSNF. The helical transmembrane segment at 602 to 622 threads the bilayer; the sequence is FFLLVLLIGLCLAIIPLTISI. The Extracellular segment spans residues 623 to 665; that stretch reads SRIPSSKACGPFTNFNTTWEVIPKTVSTFPSSLQSFIHGVTSE. The N-linked (GlcNAc...) asparagine glycan is linked to N638. A helical transmembrane segment spans residues 666–686; it reads AFAVPFFMIICLIMFYFIALA. The Cytoplasmic portion of the chain corresponds to 687-723; the sequence is GAHKRVVIQLREQLSLESRDKCYLIQKLTEAQRDMRN.

Belongs to the TMC family. In terms of assembly, interacts with PIEZO2; the interaction inhibits PIEZO2-conducted mechanically activated currents.

The protein localises to the membrane. Functionally, acts as an inhibitory modulator of PIEZO2 mechanosensitive channel in dorsal root ganglion (DRG) neurons through physical interactions or interference with the interaction between PIEZO2 and the cytoskeleton. The sequence is that of Transmembrane channel-like protein 7 from Homo sapiens (Human).